The following is a 247-amino-acid chain: 14-3-3 protein zeta (247 aa).

It belongs to the 14-3-3 family. Homodimer.

The protein localises to the cytoplasm. Adapter protein implicated in the regulation of a large spectrum of both general and specialized signaling pathways. Binds to a large number of partners, usually by recognition of a phosphoserine or phosphothreonine motif. Binding generally results in the modulation of the activity of the binding partner. The sequence is that of 14-3-3 protein zeta (14-3-3zeta) from Bombyx mori (Silk moth).